A 416-amino-acid chain; its full sequence is CBL-interacting serine/threonine-protein kinase 21 (416 aa).

Residues Tyr-12–Phe-264 enclose the Protein kinase domain. Residues Ile-18–Val-26 and Lys-41 each bind ATP. Asp-134 (proton acceptor) is an active-site residue. Residues Asp-152–Glu-178 are activation loop. A Phosphoserine modification is found at Ser-156. Thr-167 carries the phosphothreonine modification. An NAF domain is found at Ala-291–Glu-315. Residues Arg-321–Glu-351 form a PPI region.

Belongs to the protein kinase superfamily. CAMK Ser/Thr protein kinase family. SNF1 subfamily. In terms of assembly, interacts with CBL9. Requires Mn(2+) as cofactor.

The enzyme catalyses L-seryl-[protein] + ATP = O-phospho-L-seryl-[protein] + ADP + H(+). It carries out the reaction L-threonyl-[protein] + ATP = O-phospho-L-threonyl-[protein] + ADP + H(+). Its function is as follows. CIPK serine-threonine protein kinases interact with CBL proteins. Binding of a CBL protein to the regulatory NAF domain of CIPK protein lead to the activation of the kinase in a calcium-dependent manner. This Arabidopsis thaliana (Mouse-ear cress) protein is CBL-interacting serine/threonine-protein kinase 21 (CIPK21).